A 603-amino-acid chain; its full sequence is NADH-ubiquinone oxidoreductase chain 5 (603 aa).

The next 16 helical transmembrane spans lie at 4-24, 38-58, 89-109, 122-142, 171-191, 211-233, 241-261, 273-293, 301-320, 325-347, 366-386, 405-424, 457-477, 488-508, 524-544, and 582-602; these read FTTM…ATLI, TAIA…ICLG, FLPV…WYMA, LIFL…QLFI, AILY…WFLL, LPLL…HPWL, TPVS…FLLI, IQTL…ICAL, IVAF…IGIN, ALLH…GSII, MPLT…MPFL, NTWA…AYST, LMLG…PMSL, LAAL…NYLA, IMLG…SLLM, and GLIK…LLMI.

It belongs to the complex I subunit 5 family. In terms of assembly, core subunit of respiratory chain NADH dehydrogenase (Complex I) which is composed of 45 different subunits.

The protein resides in the mitochondrion inner membrane. It carries out the reaction a ubiquinone + NADH + 5 H(+)(in) = a ubiquinol + NAD(+) + 4 H(+)(out). Functionally, core subunit of the mitochondrial membrane respiratory chain NADH dehydrogenase (Complex I) which catalyzes electron transfer from NADH through the respiratory chain, using ubiquinone as an electron acceptor. Essential for the catalytic activity and assembly of complex I. In Pongo abelii (Sumatran orangutan), this protein is NADH-ubiquinone oxidoreductase chain 5 (MT-ND5).